Reading from the N-terminus, the 403-residue chain is MKLPVYLDYSATTPVDPRVAEKMIPFLTENFGNPASRSHTFGWTAEQAVENAREEVAKLVNADPREIVWTSGATESDNLAIKGAAEFYQTKGRHLITVKTEHKAVLDTMRELESSGFEVTYLEPMANGLLDLDAFRAAIRPDTVLASVMQVNNEIGVIQDIAAIGGICREHGVIFHVDAAQATGKVEIDLEQLPVDLMSFSAHKTYGPKGIGALYVRRKPRIRLKAQMHGGGHERGLRSGTLATHQIVGMGEAFRIAREEMAAENERIRRLRDRLLAGLADMEEVFINGDLEQRVPHNLNISFNYVEGESLMMAIKDLAVSSGSACTSASLEPSYVLRALGRSDELAHSSIRFTLGRYTTAEDVDFAISLIKDKVARLREISPLWEMYKDGIDLNTVQWAAAH.

Residues 73 to 74, asparagine 153, glutamine 181, and 201 to 203 contribute to the pyridoxal 5'-phosphate site; these read AT and SAH. Residue lysine 204 is modified to N6-(pyridoxal phosphate)lysine. Threonine 241 contributes to the pyridoxal 5'-phosphate binding site. The active-site Cysteine persulfide intermediate is the cysteine 326. [2Fe-2S] cluster is bound at residue cysteine 326.

Belongs to the class-V pyridoxal-phosphate-dependent aminotransferase family. NifS/IscS subfamily. As to quaternary structure, homodimer. Forms a heterotetramer with IscU, interacts with other sulfur acceptors. It depends on pyridoxal 5'-phosphate as a cofactor.

The protein localises to the cytoplasm. The enzyme catalyses (sulfur carrier)-H + L-cysteine = (sulfur carrier)-SH + L-alanine. Its pathway is cofactor biosynthesis; iron-sulfur cluster biosynthesis. Its function is as follows. Master enzyme that delivers sulfur to a number of partners involved in Fe-S cluster assembly, tRNA modification or cofactor biosynthesis. Catalyzes the removal of elemental sulfur atoms from cysteine to produce alanine. Functions as a sulfur delivery protein for Fe-S cluster synthesis onto IscU, an Fe-S scaffold assembly protein, as well as other S acceptor proteins. In Methylococcus capsulatus (strain ATCC 33009 / NCIMB 11132 / Bath), this protein is Cysteine desulfurase IscS.